The following is a 382-amino-acid chain: Lipid-A-disaccharide synthase (382 aa).

Belongs to the LpxB family.

It catalyses the reaction 2-N,3-O-bis[(3R)-3-hydroxytetradecanoyl]-alpha-D-glucosaminyl 1-phosphate + UDP-2-N,3-O-bis[(3R)-3-hydroxytetradecanoyl]-alpha-D-glucosamine = lipid A disaccharide (E. coli) + UDP + H(+). The catalysed reaction is a lipid X + a UDP-2-N,3-O-bis[(3R)-3-hydroxyacyl]-alpha-D-glucosamine = a lipid A disaccharide + UDP + H(+). Its pathway is glycolipid biosynthesis; lipid IV(A) biosynthesis; lipid IV(A) from (3R)-3-hydroxytetradecanoyl-[acyl-carrier-protein] and UDP-N-acetyl-alpha-D-glucosamine: step 5/6. Functionally, condensation of UDP-2,3-diacylglucosamine and 2,3-diacylglucosamine-1-phosphate to form lipid A disaccharide, a precursor of lipid A, a phosphorylated glycolipid that anchors the lipopolysaccharide to the outer membrane of the cell. This chain is Lipid-A-disaccharide synthase, found in Escherichia coli (strain ATCC 8739 / DSM 1576 / NBRC 3972 / NCIMB 8545 / WDCM 00012 / Crooks).